A 506-amino-acid chain; its full sequence is Alpha-L-arabinofuranosidase B (506 aa).

Residues 1-26 form the signal peptide; sequence MSSGLSLERACAVALGIVASASLVAA. Residues 27–343 form a catalytic region; sequence GPCDIYSSGG…ADIVAAKYAI (317 aa). Intrachain disulfides connect cysteine 29–cysteine 39, cysteine 89–cysteine 94, and cysteine 184–cysteine 185. An N-linked (GlcNAc...) asparagine glycan is attached at asparagine 91. Aspartate 227 contributes to the substrate binding site. Glutamate 229 acts as the Nucleophile in catalysis. Positions 230 and 304 each coordinate substrate. The active-site Proton donor is the aspartate 305. The segment at 344–506 is ABD; it reads ASLTSGPALT…VSWVVSTGFA (163 aa). The cysteines at positions 409 and 447 are disulfide-linked. Substrate is bound by residues histidine 424, asparagine 426, phenylalanine 427, aspartate 443, histidine 471, glutamate 473, leucine 476, and aspartate 496.

The protein belongs to the glycosyl hydrolase 54 family.

Its subcellular location is the secreted. The enzyme catalyses Hydrolysis of terminal non-reducing alpha-L-arabinofuranoside residues in alpha-L-arabinosides.. It participates in glycan metabolism; L-arabinan degradation. Its function is as follows. Alpha-L-arabinofuranosidase involved in the degradation of arabinoxylan, a major component of plant hemicellulose. Able to hydrolyze 1,5-, 1,3- and 1,2-alpha-linkages not only in L-arabinofuranosyl oligosaccharides, but also in polysaccharides containing terminal non-reducing L-arabinofuranoses in side chains, like L-arabinan, arabinogalactan and arabinoxylan. This is Alpha-L-arabinofuranosidase B (abfB) from Aspergillus oryzae (strain ATCC 42149 / RIB 40) (Yellow koji mold).